We begin with the raw amino-acid sequence, 1218 residues long: NACHT, LRR and PYD domains-containing protein 1a allele 4 (1218 aa).

Polar residues predominate over residues 1–29; it reads MGESQSKQESNTRVAQHGSQQDVDPTFQT. Disordered stretches follow at residues 1-44 and 71-91; these read MGES…QVEQ and EMDH…DRSE. Over residues 77–87 the composition is skewed to basic residues; it reads RRHSHQSKKKL. An NACHT domain is found at 175–484; that stretch reads QLVIIEGAAG…EFFAAMSYIL (310 aa). Residue 181–188 participates in ATP binding; it reads GAAGIGKS. 3 LRR repeats span residues 343–364, 673–693, and 730–750; these read KERN…LTLC, NLEE…RSLC, and RLAE…RQLC. Residues 799–815 show a composition bias toward polar residues; the sequence is TMPTENTDGEESLTSSK. Residues 799–842 are disordered; it reads TMPTENTDGEESLTSSKQQQQQSGDKHMEPLGTDDDFWGPSGPV. The tract at residues 835–968 is ZU5; that stretch reads FWGPSGPVST…HFAVLENPSF (134 aa). One can recognise an FIIND domain in the interval 835-1118; that stretch reads FWGPSGPVST…LRPALPRMAS (284 aa). A UPA region spans residues 969-1118; sequence SPMGVLLRMI…LRPALPRMAS (150 aa). The CARD domain occupies 1122-1211; that stretch reads DAPALLHFVD…HLIMDLLEKS (90 aa).

Belongs to the NLRP family. In terms of assembly, interacts (via LRR repeats) with BCL2 and BCL2L1 (via the loop between motifs BH4 and BH3). Interacts with NOD2; this interaction is enhanced in the presence of muramyl dipeptide (MDP) and increases IL1B release. Interacts with EIF2AK2/PKR; this interaction requires EIF2AK2 activity, is accompanied by EIF2AK2 autophosphorylation and promotes inflammasome assembly in response to danger-associated signals. Interacts with MEFV; this interaction targets Nlrp1a to degradation by autophagy, hence preventing excessive IL1B- and IL18-mediated inflammation. Interacts with DPP9; leading to inhibit activation of the inflammasome. DPP9 acts via formation of a ternary complex, composed of a DPP9 homodimer, one full-length NLRP1 protein, and one cleaved C-terminus of Nlrp1a (NACHT, LRR and PYD domains-containing protein 1a, C-terminus). Interacts with DPP8; leading to inhibit activation of the inflammasome, probably via formation of a ternary complex with DPP8. As to quaternary structure, interacts with the C-terminal part of Nlrp1a (NACHT, LRR and PYD domains-containing protein 1a, C-terminus) in absence of pathogens and other damage-associated signals. Interacts with the N-terminal part of Nlrp1a (NACHT, LRR and PYD domains-containing protein 1a, N-terminus) in absence of pathogens and other damage-associated signals. Homomultimer; forms the Nlrp1a inflammasome polymeric complex, a filament composed of homopolymers of this form in response to pathogens and other damage-associated signals. The Nlrp1a inflammasome polymeric complex directly recruits pro-caspase-1 (proCASP1) independently of PYCARD/ASC. Interacts (via CARD domain) with CASP1 (via CARD domain); leading to CASP1 activation. Autocatalytically cleaved. Autocatalytic cleavage in FIIND region occurs constitutively, prior to activation signals, and is required for inflammasome activity (IL1B release), possibly by facilitating CASP1 binding. Both N- and C-terminal parts remain associated non-covalently. Post-translationally, ubiquitinated in response to pathogen-associated signals, leading to its degradation by the proteasome and subsequent release of the cleaved C-terminal part of the protein (NACHT, LRR and PYD domains-containing protein 1a, C-terminus), which polymerizes and forms the Nlrp1a inflammasome.

It localises to the cytoplasm. It is found in the cytosol. The protein resides in the nucleus. The protein localises to the inflammasome. Activated by pathogens and other damage-associated signals: activation promotes ubiquitination and degradation of the N-terminal part, releasing the cleaved C-terminal part of the protein (NACHT, LRR and PYD domains-containing protein 1a, C-terminus), which polymerizes and forms the Nlrp1a inflammasome. Nlrp1a inflammasome is inhibited by DPP8 and DPP9, which sequester the C-terminal fragment of Nlrp1a (NACHT, LRR and PYD domains-containing protein 1a, C-terminus) in a ternary complex, thereby preventing Nlrp1a oligomerization and activation. Nlrp1a inflammasome is strongly activated by Val-boroPro (Talabostat, PT-100), an inhibitor of dipeptidyl peptidases DPP8 and DPP9. Val-boroPro relieves inhibition of DPP8 and/or DPP9 by promoting disruption of the ternary complex, releasing its C-terminal part from autoinhibition. Not activated by cleavage by B.anthracis lethal toxin (LT) endopeptidase. Its function is as follows. Acts as the sensor component of the Nlrp1a inflammasome, which mediates inflammasome activation in response to various pathogen-associated signals, leading to subsequent pyroptosis. Inflammasomes are supramolecular complexes that assemble in the cytosol in response to pathogens and other damage-associated signals and play critical roles in innate immunity and inflammation. Acts as a recognition receptor (PRR): recognizes specific pathogens and other damage-associated signals, such as Val-boroPro inhibitor, and mediates the formation of the inflammasome polymeric complex. In response to pathogen-associated signals, the N-terminal part of Nlrp1a is degraded by the proteasome, releasing the cleaved C-terminal part of the protein (NACHT, LRR and PYD domains-containing protein 1a, C-terminus), which polymerizes to initiate the formation of the inflammasome complex: the inflammasome directly recruits pro-caspase-1 (proCASP1) independently of PYCARD/ASC and promotes caspase-1 (CASP1) activation, which subsequently cleaves and activates inflammatory cytokines IL1B and IL18 and gasdermin-D (GSDMD), leading to pyroptosis. In the absence of GSDMD expression, the Nlrp1a inflammasome is able to recruit and activate CASP8, leading to activation of gasdermin-E (GSDME). Constitutes the precursor of the Nlrp1a inflammasome, which mediates autoproteolytic processing within the FIIND domain to generate the N-terminal and C-terminal parts, which are associated non-covalently in absence of pathogens and other damage-associated signals. In terms of biological role, regulatory part that prevents formation of the Nlrp1a inflammasome: in absence of pathogens and other damage-associated signals, interacts with the C-terminal part of Nlrp1a (NACHT, LRR and PYD domains-containing protein 1a, C-terminus), preventing activation of the Nlrp1a inflammasome. In response to pathogen-associated signals, this part is ubiquitinated by the N-end rule pathway and degraded by the proteasome, releasing the cleaved C-terminal part of the protein, which polymerizes and forms the Nlrp1a inflammasome. Functionally, constitutes the active part of the Nlrp1a inflammasome. In absence of pathogens and other damage-associated signals, interacts with the N-terminal part of Nlrp1a (NACHT, LRR and PYD domains-containing protein 1a, N-terminus), preventing activation of the Nlrp1a inflammasome. In response to pathogen-associated signals, the N-terminal part of Nlrp1a is degraded by the proteasome, releasing this form, which polymerizes to form the Nlrp1a inflammasome complex: the Nlrp1a inflammasome complex then directly recruits pro-caspase-1 (proCASP1) and promotes caspase-1 (CASP1) activation, leading to gasdermin-D (GSDMD) cleavage and subsequent pyroptosis. The protein is NACHT, LRR and PYD domains-containing protein 1a allele 4 of Rattus norvegicus (Rat).